The primary structure comprises 196 residues: dITP/XTP pyrophosphatase (196 aa).

7–12 (TGNAGK) serves as a coordination point for substrate. Glu39 and Asp68 together coordinate Mg(2+). Asp68 acts as the Proton acceptor in catalysis. Substrate contacts are provided by residues Ser69, 153–156 (HGYD), Lys176, and 181–182 (HR).

The protein belongs to the HAM1 NTPase family. Homodimer. Requires Mg(2+) as cofactor.

It catalyses the reaction XTP + H2O = XMP + diphosphate + H(+). The enzyme catalyses dITP + H2O = dIMP + diphosphate + H(+). It carries out the reaction ITP + H2O = IMP + diphosphate + H(+). Pyrophosphatase that catalyzes the hydrolysis of nucleoside triphosphates to their monophosphate derivatives, with a high preference for the non-canonical purine nucleotides XTP (xanthosine triphosphate), dITP (deoxyinosine triphosphate) and ITP. Seems to function as a house-cleaning enzyme that removes non-canonical purine nucleotides from the nucleotide pool, thus preventing their incorporation into DNA/RNA and avoiding chromosomal lesions. The chain is dITP/XTP pyrophosphatase from Thioalkalivibrio sulfidiphilus (strain HL-EbGR7).